The sequence spans 323 residues: Transcription factor MYB56 (323 aa).

The span at 1 to 14 shows a compositional bias: basic and acidic residues; that stretch reads MNPNLLEKDLRGKE. A disordered region spans residues 1 to 84; the sequence is MNPNLLEKDL…EKSLRMRGKS (84 aa). Residues 27–60 are compositionally biased toward polar residues; that stretch reads NFRSLPNSHTAACKTSLNNPSISRNHPHNKSASV. Residues 66-78 show a composition bias toward basic and acidic residues; the sequence is EHGNERGENEKSL. 2 consecutive HTH myb-type domains span residues 88–139 and 140–194; these read TKVC…FNQL and DPRI…ARRT. DNA-binding regions (H-T-H motif) lie at residues 116–138 and 167–190; these read WNLISNHLLGRSGKSCRLRWFNQ and WALISRLFPGRTDNAVKNHWHVIM. Positions 192-217 are disordered; that stretch reads RRTRESQRQRQQPPPTLSRDAEMTVS.

As to quaternary structure, forms homodimer. Interacts with the dephosphorylated active form of BES1 in the nucleus of quiescent center (QC) cells. Interacts with BPM1, BPM2, BPM3, BPM4, BPM5 and BPM6 at the promoter of FLOWERING LOCUS T (FT). As to expression, mostly expressed in flowers (at protein level) and siliques, and, to a lower extent, in roots, stems and leaves. Expressed in embryos (e.g. heart and torpedo stages) and cotyledons, and, at low levels, in roots and inflorescence. Accumulates specifically in root apical meristem quiescent center (QC) and vascular initial cells.

It is found in the nucleus. The protein resides in the cytoplasm. Its subcellular location is the cytosol. Its function is as follows. Acts as a cell-specific local repressor of quiescent center (QC) self-renewal by cell divisions in the primary root. Counteracts brassinosteroid (BR)-mediated cell division in the QC cells. Regulates maternally seed size, especially before the heart stage, promoting both endothelial cells expansion and cell number in the outer integument layer of the seed coat. Modulates the expression of genes involved in cell wall metabolism such as cell division and expansion. Negative regulator of flowering via the repression of FT transcription. The protein is Transcription factor MYB56 of Arabidopsis thaliana (Mouse-ear cress).